Here is a 142-residue protein sequence, read N- to C-terminus: Large ribosomal subunit protein uL13 (142 aa).

The protein belongs to the universal ribosomal protein uL13 family. As to quaternary structure, part of the 50S ribosomal subunit.

Its function is as follows. This protein is one of the early assembly proteins of the 50S ribosomal subunit, although it is not seen to bind rRNA by itself. It is important during the early stages of 50S assembly. The sequence is that of Large ribosomal subunit protein uL13 from Stutzerimonas stutzeri (strain A1501) (Pseudomonas stutzeri).